The sequence spans 1024 residues: Multidrug resistance protein MdtC (1024 aa).

The next 12 membrane-spanning stretches (helical) occupy residues 12–32 (VATTLLTLAITLSGVIGFSLL), 333–353 (EVERSLVIAVALVILVVFLFL), 360–380 (LIPAVAVPVSLIGTFTAMYLC), 387–407 (LSLMALTIATGFVVDDAIVVL), 431–451 (VGFTVLSMSISLVAVFIPLLL), 463–483 (FAVTLSVAIGISLVISLTLTP), 528–548 (WVMVVLLSTIALNVWLYISIP), 853–873 (LWLIMAAIATVYIVLGILYES), 875–895 (VHPLTILSTLPSAGVGALLAL), 897–917 (LFDAPFSLIALIGIMLLIGIV), 953–973 (PILMTTLAALFGALPLVISSG), and 984–1004 (ITIVGGLVMSQLLTLYTTPVV).

This sequence belongs to the resistance-nodulation-cell division (RND) (TC 2.A.6) family. MdtC subfamily. As to quaternary structure, part of a tripartite efflux system composed of MdtA, MdtB and MdtC. MdtC forms a heteromultimer with MdtB.

Its subcellular location is the cell inner membrane. The polypeptide is Multidrug resistance protein MdtC (Yersinia enterocolitica serotype O:8 / biotype 1B (strain NCTC 13174 / 8081)).